Consider the following 298-residue polypeptide: Nucleotide-binding protein GK3066 (298 aa).

17–24 (GMSGAGKT) lines the ATP pocket. Position 68-71 (68-71 (DLRS)) interacts with GTP.

It belongs to the RapZ-like family.

Displays ATPase and GTPase activities. This chain is Nucleotide-binding protein GK3066, found in Geobacillus kaustophilus (strain HTA426).